The sequence spans 123 residues: Large ribosomal subunit protein eL8 (123 aa).

Belongs to the eukaryotic ribosomal protein eL8 family. As to quaternary structure, part of the 50S ribosomal subunit. Probably part of the RNase P complex.

Its subcellular location is the cytoplasm. Its function is as follows. Multifunctional RNA-binding protein that recognizes the K-turn motif in ribosomal RNA, the RNA component of RNase P, box H/ACA, box C/D and box C'/D' sRNAs. The polypeptide is Large ribosomal subunit protein eL8 (Pyrococcus abyssi (strain GE5 / Orsay)).